The following is a 428-amino-acid chain: 3-phosphoshikimate 1-carboxyvinyltransferase (428 aa).

Positions 22, 23, and 27 each coordinate 3-phosphoshikimate. Lysine 22 lines the phosphoenolpyruvate pocket. Positions 96 and 124 each coordinate phosphoenolpyruvate. 7 residues coordinate 3-phosphoshikimate: serine 170, serine 171, glutamine 172, serine 198, aspartate 314, asparagine 337, and lysine 341. Residue glutamine 172 participates in phosphoenolpyruvate binding. The active-site Proton acceptor is the aspartate 314. Positions 345, 387, and 412 each coordinate phosphoenolpyruvate.

It belongs to the EPSP synthase family. Monomer.

The protein localises to the cytoplasm. The catalysed reaction is 3-phosphoshikimate + phosphoenolpyruvate = 5-O-(1-carboxyvinyl)-3-phosphoshikimate + phosphate. It participates in metabolic intermediate biosynthesis; chorismate biosynthesis; chorismate from D-erythrose 4-phosphate and phosphoenolpyruvate: step 6/7. Functionally, catalyzes the transfer of the enolpyruvyl moiety of phosphoenolpyruvate (PEP) to the 5-hydroxyl of shikimate-3-phosphate (S3P) to produce enolpyruvyl shikimate-3-phosphate and inorganic phosphate. In Photobacterium profundum (strain SS9), this protein is 3-phosphoshikimate 1-carboxyvinyltransferase.